A 264-amino-acid polypeptide reads, in one-letter code: tRNA pseudouridine synthase A (264 aa).

The Nucleophile role is filled by Asp-51. Position 109 (Tyr-109) interacts with substrate.

Belongs to the tRNA pseudouridine synthase TruA family. Homodimer.

The enzyme catalyses uridine(38/39/40) in tRNA = pseudouridine(38/39/40) in tRNA. In terms of biological role, formation of pseudouridine at positions 38, 39 and 40 in the anticodon stem and loop of transfer RNAs. The chain is tRNA pseudouridine synthase A from Actinobacillus succinogenes (strain ATCC 55618 / DSM 22257 / CCUG 43843 / 130Z).